Here is a 398-residue protein sequence, read N- to C-terminus: 1-deoxy-D-xylulose 5-phosphate reductoisomerase (398 aa).

7 residues coordinate NADPH: T11, G12, S13, I14, R38, N39, and N125. K126 lines the 1-deoxy-D-xylulose 5-phosphate pocket. E127 is a binding site for NADPH. D151 lines the Mn(2+) pocket. Residues S152, E153, S179, and H202 each contribute to the 1-deoxy-D-xylulose 5-phosphate site. Mn(2+) is bound at residue E153. Residue G208 coordinates NADPH. S215, N220, K221, and E224 together coordinate 1-deoxy-D-xylulose 5-phosphate. A Mn(2+)-binding site is contributed by E224.

This sequence belongs to the DXR family. Mg(2+) is required as a cofactor. It depends on Mn(2+) as a cofactor.

It catalyses the reaction 2-C-methyl-D-erythritol 4-phosphate + NADP(+) = 1-deoxy-D-xylulose 5-phosphate + NADPH + H(+). Its pathway is isoprenoid biosynthesis; isopentenyl diphosphate biosynthesis via DXP pathway; isopentenyl diphosphate from 1-deoxy-D-xylulose 5-phosphate: step 1/6. Its function is as follows. Catalyzes the NADPH-dependent rearrangement and reduction of 1-deoxy-D-xylulose-5-phosphate (DXP) to 2-C-methyl-D-erythritol 4-phosphate (MEP). The sequence is that of 1-deoxy-D-xylulose 5-phosphate reductoisomerase from Burkholderia pseudomallei (strain 1106a).